The sequence spans 96 residues: Large ribosomal subunit protein bL28 (96 aa).

The protein belongs to the bacterial ribosomal protein bL28 family.

The sequence is that of Large ribosomal subunit protein bL28 from Methylobacterium nodulans (strain LMG 21967 / CNCM I-2342 / ORS 2060).